A 1002-amino-acid chain; its full sequence is DNA-directed RNA polymerase 1B, mitochondrial (1002 aa).

Residues 1 to 21 constitute a mitochondrion transit peptide; it reads MWRYISKHAYSRKFRNSHDSA. Active-site residues include aspartate 703, lysine 778, and aspartate 935.

The protein belongs to the phage and mitochondrial RNA polymerase family.

The protein localises to the mitochondrion. The catalysed reaction is RNA(n) + a ribonucleoside 5'-triphosphate = RNA(n+1) + diphosphate. Its function is as follows. DNA-dependent RNA polymerase catalyzes the transcription of DNA into RNA using the four ribonucleoside triphosphates as substrates. The chain is DNA-directed RNA polymerase 1B, mitochondrial (RPOT1-TOM) from Nicotiana tabacum (Common tobacco).